The primary structure comprises 395 residues: Extracellular cysteine protease (395 aa).

The N-terminal stretch at 1-30 (MKKKLSYMITIMLAFTLSLALGLFFNSAHA) is a signal peptide. The propeptide occupies 31–221 (DSLPQKNGAN…TLEYQSTRNE (191 aa)). Active-site residues include Cys-245, His-341, and Asn-362.

This sequence belongs to the peptidase C47 family. Proteolytically cleaved.

Its subcellular location is the secreted. It localises to the cell wall. Cysteine protease able to cleave elastin, insulin, myoglobin, fibronectin, fibrinogen, HMW-kininogen, alpha-1-protease inhibitor and alpha-1-antitrypsin. Along with other extracellular proteases may contribute to the colonization and infection of human tissues. This chain is Extracellular cysteine protease (ecpA), found in Staphylococcus epidermidis (strain ATCC 35984 / DSM 28319 / BCRC 17069 / CCUG 31568 / BM 3577 / RP62A).